Reading from the N-terminus, the 258-residue chain is MLIVLSPAKSLDYKTPFKVKAPTLPEFVSESAKLITDLKKLAPQDVAKLMGLSDQLAALNVGRYRDWSKKFTEENSKPAIYAFDGDVYDGFDVKTLKPKAVEFAQDHIRILSGLYGVLKPLDLMQPYRLEMGTSFKNARGKDLYAFWGNRVTDSLKKALDKQKNPVLLNLASEEYFKVLQPKELDCPVISPVFQDAKDGKYKIISFYAKRARGLMARYVVENRITDPVDLKGFSLDDYKYYAAESKIDKPVFRRVERK.

It belongs to the UPF0246 family.

This is UPF0246 protein Pnec_1068 from Polynucleobacter necessarius subsp. necessarius (strain STIR1).